The chain runs to 315 residues: ATP synthase gamma chain (315 aa).

The protein belongs to the ATPase gamma chain family. As to quaternary structure, F-type ATPases have 2 components, CF(1) - the catalytic core - and CF(0) - the membrane proton channel. CF(1) has five subunits: alpha(3), beta(3), gamma(1), delta(1), epsilon(1). CF(0) has three main subunits: a, b and c.

The protein localises to the cellular thylakoid membrane. Its function is as follows. Produces ATP from ADP in the presence of a proton gradient across the membrane. The gamma chain is believed to be important in regulating ATPase activity and the flow of protons through the CF(0) complex. The chain is ATP synthase gamma chain from Synechococcus sp. (strain PCC 6716).